Reading from the N-terminus, the 257-residue chain is Probable enoyl-CoA hydratase echA17 (257 aa).

Belongs to the enoyl-CoA hydratase/isomerase family.

The catalysed reaction is a (3S)-3-hydroxyacyl-CoA = a (2E)-enoyl-CoA + H2O. The enzyme catalyses a 4-saturated-(3S)-3-hydroxyacyl-CoA = a (3E)-enoyl-CoA + H2O. Its function is as follows. Could possibly oxidize fatty acids using specific components. The protein is Probable enoyl-CoA hydratase echA17 (echA17) of Mycobacterium avium (strain 104).